The primary structure comprises 308 residues: Glutaminase (308 aa).

Ser66, Asn117, Glu161, Asn168, Tyr192, Tyr244, and Val262 together coordinate substrate.

This sequence belongs to the glutaminase family. In terms of assembly, homotetramer.

It carries out the reaction L-glutamine + H2O = L-glutamate + NH4(+). The polypeptide is Glutaminase (Klebsiella pneumoniae (strain 342)).